A 163-amino-acid polypeptide reads, in one-letter code: Phosphopantetheine adenylyltransferase (163 aa).

Serine 9 is a binding site for substrate. ATP-binding positions include 9 to 10 and histidine 17; that span reads SF. Lysine 41, valine 78, and arginine 92 together coordinate substrate. Residues 93–95, glutamate 103, and 128–134 each bind ATP; these read GLR and SRPITAT.

Belongs to the bacterial CoaD family. As to quaternary structure, homohexamer. It depends on Mg(2+) as a cofactor.

Its subcellular location is the cytoplasm. It catalyses the reaction (R)-4'-phosphopantetheine + ATP + H(+) = 3'-dephospho-CoA + diphosphate. It participates in cofactor biosynthesis; coenzyme A biosynthesis; CoA from (R)-pantothenate: step 4/5. Its function is as follows. Reversibly transfers an adenylyl group from ATP to 4'-phosphopantetheine, yielding dephospho-CoA (dPCoA) and pyrophosphate. This chain is Phosphopantetheine adenylyltransferase, found in Rhizobium meliloti (strain 1021) (Ensifer meliloti).